The chain runs to 396 residues: Probable peptidoglycan glycosyltransferase FtsW (396 aa).

The Cytoplasmic portion of the chain corresponds to 1 to 27 (MPFLDKVKQQYEDWTRITPSNLLYDRA). The helical transmembrane segment at 28-48 (LLLLFFVLLLIGLLAVSSASI) threads the bilayer. The Periplasmic portion of the chain corresponds to 49–64 (PVGTRLFKDPFYFAKR). Residues 65–85 (DAIYVFLSCVTCYLCVQVPME) form a helical membrane-spanning segment. Topologically, residues 86–93 (KWEQWHVR) are cytoplasmic. Residues 94-114 (LFAFAIFLLILVLIPGIGLSV) traverse the membrane as a helical segment. The Periplasmic segment spans residues 115 to 122 (NGARRWIP). A helical transmembrane segment spans residues 123 to 143 (MVLFNFQPAEFAKLALTCFLA). The Cytoplasmic segment spans residues 144 to 157 (SYFTRKYDEVRSRK). A helical transmembrane segment spans residues 158–178 (LSAFKPFALMGLMGLFLLSQP). Over 179–183 (DLGST) the chain is Periplasmic. 2 helical membrane-spanning segments follow: residues 184–204 (VVLF…FWQF) and 205–225 (VGLM…SAYR). Residues 226–285 (LKRFTGFLDPFKDPYGTGFQLSNSLMAFGRGEWVGEGLGNSIQKLEYLPEAHTDFVMAVV) are Periplasmic-facing. A helical transmembrane segment spans residues 286–306 (GEEFGFLGILVIVILLGLLIF). At 307–323 (RAMKIGRESLLLEQRFK) the chain is on the cytoplasmic side. The helical transmembrane segment at 324-344 (GFFAFGISFWIFFQGFVNLGM) threads the bilayer. Topologically, residues 345-355 (SLGLLPTKGLT) are periplasmic. The chain crosses the membrane as a helical span at residues 356 to 376 (FPLISYGGSSLIIMSMTIGLL). Over 377-396 (LRIDHENRLMRIGQARLRDD) the chain is Cytoplasmic.

It belongs to the SEDS family. FtsW subfamily.

It localises to the cell inner membrane. The enzyme catalyses [GlcNAc-(1-&gt;4)-Mur2Ac(oyl-L-Ala-gamma-D-Glu-L-Lys-D-Ala-D-Ala)](n)-di-trans,octa-cis-undecaprenyl diphosphate + beta-D-GlcNAc-(1-&gt;4)-Mur2Ac(oyl-L-Ala-gamma-D-Glu-L-Lys-D-Ala-D-Ala)-di-trans,octa-cis-undecaprenyl diphosphate = [GlcNAc-(1-&gt;4)-Mur2Ac(oyl-L-Ala-gamma-D-Glu-L-Lys-D-Ala-D-Ala)](n+1)-di-trans,octa-cis-undecaprenyl diphosphate + di-trans,octa-cis-undecaprenyl diphosphate + H(+). The protein operates within cell wall biogenesis; peptidoglycan biosynthesis. In terms of biological role, peptidoglycan polymerase that is essential for cell division. This is Probable peptidoglycan glycosyltransferase FtsW from Pasteurella multocida (strain Pm70).